The following is a 258-amino-acid chain: F-box/LRR-repeat protein 25 (258 aa).

The F-box domain maps to 27-76 (SDSISNLPDEILHHILSFIPETNLVIRTSVLSKRWRHVWSKTPHLSFEWL). LRR repeat units follow at residues 101–130 (CTSY…SLAF), 136–161 (CNKF…SLTP), 177–202 (RCNL…SLKF), and 224–249 (RRSC…RLRD).

In Arabidopsis thaliana (Mouse-ear cress), this protein is F-box/LRR-repeat protein 25 (FBL25).